We begin with the raw amino-acid sequence, 626 residues long: tRNA 5-methylaminomethyl-2-thiouridine biosynthesis bifunctional protein MnmC (626 aa).

Residues 1-237 are tRNA (mnm(5)s(2)U34)-methyltransferase; that stretch reads MKGPQLDYAD…KRDMTVGVFQ (237 aa). Residues 255–626 are FAD-dependent cmnm(5)s(2)U34 oxidoreductase; the sequence is IGSGLSGANV…RVLPNRFSQE (372 aa).

The protein in the N-terminal section; belongs to the methyltransferase superfamily. tRNA (mnm(5)s(2)U34)-methyltransferase family. It in the C-terminal section; belongs to the DAO family. FAD is required as a cofactor.

Its subcellular location is the cytoplasm. The catalysed reaction is 5-aminomethyl-2-thiouridine(34) in tRNA + S-adenosyl-L-methionine = 5-methylaminomethyl-2-thiouridine(34) in tRNA + S-adenosyl-L-homocysteine + H(+). In terms of biological role, catalyzes the last two steps in the biosynthesis of 5-methylaminomethyl-2-thiouridine (mnm(5)s(2)U) at the wobble position (U34) in tRNA. Catalyzes the FAD-dependent demodification of cmnm(5)s(2)U34 to nm(5)s(2)U34, followed by the transfer of a methyl group from S-adenosyl-L-methionine to nm(5)s(2)U34, to form mnm(5)s(2)U34. The polypeptide is tRNA 5-methylaminomethyl-2-thiouridine biosynthesis bifunctional protein MnmC (Hahella chejuensis (strain KCTC 2396)).